A 289-amino-acid polypeptide reads, in one-letter code: Serine/threonine-protein phosphatase Pgam5, mitochondrial (289 aa).

Belongs to the phosphoglycerate mutase family. BPG-dependent PGAM subfamily. Interacts with Pk92B/ASK1.

It localises to the mitochondrion outer membrane. It carries out the reaction O-phospho-L-seryl-[protein] + H2O = L-seryl-[protein] + phosphate. It catalyses the reaction O-phospho-L-threonyl-[protein] + H2O = L-threonyl-[protein] + phosphate. In terms of biological role, displays phosphatase activity for serine/threonine residues, and dephosphorylates and activates Pk92B kinase. Has apparently no phosphoglycerate mutase activity. The chain is Serine/threonine-protein phosphatase Pgam5, mitochondrial from Drosophila yakuba (Fruit fly).